The following is a 721-amino-acid chain: Mitogen-activated protein kinase 6 (721 aa).

Methionine 1 is covalently cross-linked (Peptide (Met-Gly) (interchain with G-Cter in ubiquitin)). The Protein kinase domain occupies 20-316; that stretch reads YMDLKPLGCG…AEEALSHPYM (297 aa). Residues 26 to 34 and lysine 49 contribute to the ATP site; that span reads LGCGGNGLV. The active-site Proton acceptor is the aspartate 152. A Phosphoserine; by PAK1, PAK2 and PAK3 modification is found at serine 189. The SEG motif signature appears at 189-191; that stretch reads SEG. An FRIEDE motif motif is present at residues 332–337; sequence FHIEDE. Serine 386, serine 452, serine 556, serine 558, serine 665, and serine 684 each carry phosphoserine. Positions 701-715 are enriched in polar residues; sequence AMKSSPQIPHQTYSS. The interval 701 to 721 is disordered; the sequence is AMKSSPQIPHQTYSSILKHLN.

The protein belongs to the protein kinase superfamily. CMGC Ser/Thr protein kinase family. MAP kinase subfamily. As to quaternary structure, heterodimer with ERK4/MAPK4. Interacts with (via FRIEDE motif) MAPKAPK5. Interacts with UBE3A; this interaction may be indirect and mediated by HERC2, possibly via HERC2 interaction with NEURL4. Mg(2+) serves as cofactor. In terms of processing, phosphorylated at Ser-189 by PAK1, PAK2 and PAK3 resulting in catalytic activation. Phosphorylated by MAPKAPK5 at other sites. Ubiquitination at Met-1 leads to degradation by the proteasome pathway.

It is found in the cytoplasm. It localises to the nucleus. The enzyme catalyses L-seryl-[protein] + ATP = O-phospho-L-seryl-[protein] + ADP + H(+). It carries out the reaction L-threonyl-[protein] + ATP = O-phospho-L-threonyl-[protein] + ADP + H(+). With respect to regulation, activated by phosphorylation at Ser-189. Functionally, atypical MAPK protein. Phosphorylates microtubule-associated protein 2 (MAP2) and MAPKAPK5. The precise role of the complex formed with MAPKAPK5 is still unclear, but the complex follows a complex set of phosphorylation events: upon interaction with atypical MAPKAPK5, ERK3/MAPK6 is phosphorylated at Ser-189 and then mediates phosphorylation and activation of MAPKAPK5, which in turn phosphorylates ERK3/MAPK6. May promote entry in the cell cycle. The sequence is that of Mitogen-activated protein kinase 6 (MAPK6) from Pongo abelii (Sumatran orangutan).